We begin with the raw amino-acid sequence, 286 residues long: NH(3)-dependent NAD(+) synthetase (286 aa).

G51–S58 contacts ATP. D57 provides a ligand contact to Mg(2+). R148 contacts deamido-NAD(+). T168 lines the ATP pocket. Position 173 (E173) interacts with Mg(2+). Positions 181 and 188 each coordinate deamido-NAD(+). Residues K197 and T219 each contribute to the ATP site. Residue H268–K269 participates in deamido-NAD(+) binding.

This sequence belongs to the NAD synthetase family. As to quaternary structure, homodimer.

It carries out the reaction deamido-NAD(+) + NH4(+) + ATP = AMP + diphosphate + NAD(+) + H(+). The protein operates within cofactor biosynthesis; NAD(+) biosynthesis; NAD(+) from deamido-NAD(+) (ammonia route): step 1/1. Its function is as follows. Catalyzes the ATP-dependent amidation of deamido-NAD to form NAD. Uses ammonia as a nitrogen source. In Paraburkholderia phytofirmans (strain DSM 17436 / LMG 22146 / PsJN) (Burkholderia phytofirmans), this protein is NH(3)-dependent NAD(+) synthetase.